Consider the following 1423-residue polypeptide: Interphotoreceptor matrix proteoglycan 2 (1423 aa).

A signal peptide spans 1 to 27 (MFAFLWKISLCLLVLGVITGDPQAVAA). The Extracellular portion of the chain corresponds to 28 to 1289 (EEKQAKDASP…EYVSEPLVVG (1262 aa)). An N-linked (GlcNAc...) asparagine glycan is attached at asparagine 150. The region spanning 245-358 (TEQMIEFSIV…NPTVVYTISD (114 aa)) is the SEA 1 domain. The hyaluronan-binding motif involved in chondroitin sulfate A-binding stretch occupies residues 265 to 273 (SDPDTAKYQ). 2 N-linked (GlcNAc...) asparagine glycosylation sites follow: asparagine 325 and asparagine 375. Disordered regions lie at residues 423–469 (AERP…DSEV), 522–559 (DSSD…DYTA), and 577–602 (TKRT…ADSL). A compositionally biased stretch (acidic residues) spans 523-532 (SSDEFEDTGL). The span at 537 to 546 (LLPSSPSSHL) shows a compositional bias: low complexity. Positions 577–587 (TKRTVTAEKEV) are enriched in basic and acidic residues. N-linked (GlcNAc...) asparagine glycosylation is present at asparagine 676. Residues 886 to 907 (FEVSTDTSTEEQQSLDSSLADR) are disordered. The segment covering 889–902 (STDTSTEEQQSLDS) has biased composition (polar residues). Residues 1083–1196 (RALVVFFSLR…YSLDVESGEQ (114 aa)) enclose the SEA 2 domain. N-linked (GlcNAc...) asparagine glycosylation is found at asparagine 1128, asparagine 1142, and asparagine 1160. 2 consecutive EGF-like domains span residues 1196-1234 (QADP…IDGL) and 1237-1279 (NSIC…EHCE). Intrachain disulfides connect cysteine 1200/cysteine 1211, cysteine 1205/cysteine 1222, cysteine 1240/cysteine 1253, cysteine 1247/cysteine 1263, and cysteine 1265/cysteine 1278. Residues 1266 to 1274 (RVGENWWYR) are hyaluronan-binding motif involved in chondroitin sulfate C-binding. The helical transmembrane segment at 1290–1310 (IAIASVAGFLLVASAVIFFLA) threads the bilayer. Topologically, residues 1311 to 1423 (RTLRDQYTKS…FVRQHQMKLL (113 aa)) are cytoplasmic. The segment at 1322–1327 (TEDSQG) is hyaluronan-binding motif involved in chondroitin sulfate C-binding.

In terms of processing, highly glycosylated (N- and O-linked carbohydrates). As to expression, expressed in retina.

The protein resides in the photoreceptor outer segment membrane. Its subcellular location is the photoreceptor inner segment membrane. It is found in the secreted. The protein localises to the extracellular space. It localises to the extracellular matrix. The protein resides in the interphotoreceptor matrix. In terms of biological role, chondroitin sulfate- and hyaluronan-binding proteoglycan involved in the organization of interphotoreceptor matrix. The chain is Interphotoreceptor matrix proteoglycan 2 (IMPG2) from Gallus gallus (Chicken).